A 261-amino-acid chain; its full sequence is Small ribosomal subunit protein uS2 (261 aa).

The interval 224 to 261 is disordered; sequence GRQGEDDEAVQQEEVAEGVSKDSLEDLKKTVEEGSNEE. The span at 228 to 239 shows a compositional bias: acidic residues; that stretch reads EDDEAVQQEEVA. Basic and acidic residues predominate over residues 242-255; the sequence is VSKDSLEDLKKTVE.

Belongs to the universal ribosomal protein uS2 family.

The sequence is that of Small ribosomal subunit protein uS2 (rpsB) from Pediococcus acidilactici.